We begin with the raw amino-acid sequence, 368 residues long: Molybdenum import ATP-binding protein ModC (368 aa).

Residues 1 to 230 (MTIKIQFKQT…HAMRPWQSFS (230 aa)) enclose the ABC transporter domain. Residue 32–39 (GRSGAGKT) coordinates ATP. Residues 291 to 362 (ATSIRNVLPA…VKGVSVTQRD (72 aa)) form the Mop domain.

Belongs to the ABC transporter superfamily. Molybdate importer (TC 3.A.1.8) family. In terms of assembly, the complex is composed of two ATP-binding proteins (ModC), two transmembrane proteins (ModB) and a solute-binding protein (ModA).

The protein resides in the cell inner membrane. The enzyme catalyses molybdate(out) + ATP + H2O = molybdate(in) + ADP + phosphate + H(+). Its function is as follows. Part of the ABC transporter complex ModABC involved in molybdenum import. Responsible for energy coupling to the transport system. The protein is Molybdenum import ATP-binding protein ModC of Vibrio parahaemolyticus serotype O3:K6 (strain RIMD 2210633).